The chain runs to 410 residues: Argininosuccinate synthase (410 aa).

Residues 14 to 22 (AYSGGLDTS) and Ala41 contribute to the ATP site. L-citrulline is bound by residues Tyr92 and Ser97. Gly122 lines the ATP pocket. 3 residues coordinate L-aspartate: Thr124, Asn128, and Asp129. Asn128 contributes to the L-citrulline binding site. Residues Arg132, Ser183, Ser192, Glu268, and Tyr280 each coordinate L-citrulline.

The protein belongs to the argininosuccinate synthase family. Type 1 subfamily. As to quaternary structure, homotetramer.

It localises to the cytoplasm. The catalysed reaction is L-citrulline + L-aspartate + ATP = 2-(N(omega)-L-arginino)succinate + AMP + diphosphate + H(+). It functions in the pathway amino-acid biosynthesis; L-arginine biosynthesis; L-arginine from L-ornithine and carbamoyl phosphate: step 2/3. This chain is Argininosuccinate synthase, found in Parvibaculum lavamentivorans (strain DS-1 / DSM 13023 / NCIMB 13966).